The sequence spans 448 residues: Probable cytosolic Fe-S cluster assembly factor Bm6838 (448 aa).

Positions 27, 66, 69, 72, 170, 226, 370, and 374 each coordinate [4Fe-4S] cluster.

It belongs to the NARF family.

Component of the cytosolic iron-sulfur (Fe/S) protein assembly machinery. Required for maturation of extramitochondrial Fe/S proteins. This is Probable cytosolic Fe-S cluster assembly factor Bm6838 from Brugia malayi (Filarial nematode worm).